Here is a 203-residue protein sequence, read N- to C-terminus: Potassium channel Cha6605_3372 (203 aa).

Residues Met1–Gln7 lie on the Cytoplasmic side of the membrane. The chain crosses the membrane as a helical span at residues Ser8–Glu31. The RxxxFSD motif signature appears at Arg12–Asp18. Topologically, residues Ile32 to Leu52 are extracellular. A short helix H1 region spans residues His37–Thr42. The segment at Gly44–Leu50 is short helix H2. Residues Trp53–Ser78 form a helical membrane-spanning segment. The Cytoplasmic portion of the chain corresponds to Leu79–Asp84. A helical membrane pass occupies residues His85–Glu110. The Extracellular portion of the chain corresponds to Tyr111–Ala117. A helical transmembrane segment spans residues Arg118–Ala142. At Ala143 to Asp154 the chain is on the cytoplasmic side. A helical transmembrane segment spans residues Arg155–Ile181. At Ser182 to Val183 the chain is on the extracellular side. The chain crosses the membrane as a helical span at residues Trp184 to Leu199. Topologically, residues Arg200–Ala203 are cytoplasmic.

Belongs to the TMEM175 family. Homotetramer.

The protein localises to the membrane. It catalyses the reaction K(+)(in) = K(+)(out). Its function is as follows. Potassium channel. The channel is permeable for K(+), Rb(+) and Cs(+), while it is unable to conduct Na(+). In Chamaesiphon minutus (strain ATCC 27169 / PCC 6605), this protein is Potassium channel Cha6605_3372.